The primary structure comprises 367 residues: Secondary metabolism regulator laeA (367 aa).

Residues 1-82 (MFGQQQQQQP…PETYPGHEEN (82 aa)) form a disordered region. Polar residues predominate over residues 19–41 (LNHNSRWTPPNESAQPRRSSNAM). Basic and acidic residues-rich tracts occupy residues 47-56 (TDRDPAEGHP) and 71-82 (KSPETYPGHEEN).

This sequence belongs to the methyltransferase superfamily. LaeA methyltransferase family. As to quaternary structure, component of the heterotrimeric velvet complex composed of laeA, veA and velB; VeA acting as a bridging protein between laeA and velB.

Its subcellular location is the nucleus. The enzyme catalyses L-methionyl-[protein] + S-adenosyl-L-methionine = S-methyl-L-methionyl-[protein] + S-adenosyl-L-homocysteine. Methyltransferase that performs automethylation. No other methyl-accepting substrate has been identified yet. Component of the velvet transcription factor complex that acts as a global regulator for secondary metabolite gene expression. Controls the expression of the monacolin K gene clusters. Also regulates pigmentation. This chain is Secondary metabolism regulator laeA, found in Monascus pilosus (Red mold).